A 104-amino-acid polypeptide reads, in one-letter code: Type VII secretion system extracellular protein B (104 aa).

This sequence belongs to the WXG100 family. In terms of assembly, homodimer. When mixed with EsxA does not form heterodimers. Forms heterodimers with EsxD.

It is found in the secreted. Functionally, virulence factor that is important for the establishment of infection in the host. EsxB is required for EsxA synthesis as well as secretion. Mediates together with EsxA the release of S.aureus from the host cell. Also inhibits host cytokine production and thus modulates dendritic cell-mediated immunity. This chain is Type VII secretion system extracellular protein B, found in Staphylococcus aureus (strain USA300).